The chain runs to 784 residues: MTDAQTAAERIARLRSEIDEHNYRYYVLDAPSVPDAEYDRLFNELKALEAEHPELVTPESPTQRVGGEALAAFGQVRHELPMLSLGNAFAEEDLLDFDRNVCKGLDRGIEVVEYSCEPKLDGLAVSLLYEDGQLVRGATRGDGSTGEDITANVRTVRNIPLRLHGQGWPAVLEVRGEIYMPRAGFEALNARAIENGGKTFANPRNAAAGSLRQLDPKITAGRPLEFCGYGIGRFEGAEVPQTHTSLLETLRRWGLPISRELQLARSVQDCLAYYRAIGERRQGLAYDIDGVVFKVNRLDWQRELGFRARTPHWAIAYKFPAQEELTELLGVEFQVGRTGAITPVARLKPVQVAGVTVSNASLHNMDEVARLGVMIGDTVIVRRAGDVIPQIMQVVGERRPADARPVEVPRQCPVCGSAVERTQLVKRGKGRASLSEGAIYRCVGRLACQAQLKQAIVHFVSRRAMDIDGLGERIVEQLVDTGLVKSPADLYILTFEQLVVLDGFAEVSSNNLLAAIAASRRPSLARFIYALGIPDVGEETAKRLARALGSLTRIEKALPEVLIWLPDVGLEVAHEIHSFFRDEHNLTVIGQLLARGVELQEEGELHAEFAACASLGELLDKLDIPGIAATGAKKLAEAAGSLEAVIGLSQDWLTLNTTKGLSEKARQALREFFAVPANVEHARAIEGQLREFGMHWESERRCAEGLPLAGQTWVLTGTLESMSREQGKARLESLGAKVAGSVSAKTACVVAGPGAGSKLAKAGELGVKVLDEEAFLALLRQLES.

Residues 35–39 (DAEYD), 84–85 (SL), and glutamate 117 each bind NAD(+). The N6-AMP-lysine intermediate role is filled by lysine 119. The NAD(+) site is built by arginine 140, glutamate 177, lysine 294, and lysine 318. Zn(2+)-binding residues include cysteine 412, cysteine 415, cysteine 442, and cysteine 448. The BRCT domain maps to 703-784 (AEGLPLAGQT…FLALLRQLES (82 aa)).

This sequence belongs to the NAD-dependent DNA ligase family. LigA subfamily. Mg(2+) serves as cofactor. It depends on Mn(2+) as a cofactor.

The enzyme catalyses NAD(+) + (deoxyribonucleotide)n-3'-hydroxyl + 5'-phospho-(deoxyribonucleotide)m = (deoxyribonucleotide)n+m + AMP + beta-nicotinamide D-nucleotide.. Its function is as follows. DNA ligase that catalyzes the formation of phosphodiester linkages between 5'-phosphoryl and 3'-hydroxyl groups in double-stranded DNA using NAD as a coenzyme and as the energy source for the reaction. It is essential for DNA replication and repair of damaged DNA. The sequence is that of DNA ligase from Azotobacter vinelandii (strain DJ / ATCC BAA-1303).